A 261-amino-acid chain; its full sequence is uncharacterized protein (261 aa).

Residues 135–261 (LVLKRIDEDI…VTEYTIYYSG (127 aa)) form the N-acetyltransferase domain.

It belongs to the acetyltransferase family.

This is an uncharacterized protein from Bacillus subtilis (strain 168).